We begin with the raw amino-acid sequence, 508 residues long: Probable protein kinase UbiB (508 aa).

Residues 118 to 494 form the Protein kinase domain; it reads DFDLKPVASA…QKRQNFLLLL (377 aa). ATP-binding positions include 124–132 and Lys151; that span reads VASASVAQV. Catalysis depends on Asp286, which acts as the Proton acceptor. A helical transmembrane segment spans residues 488 to 508; the sequence is QNFLLLLIAILLAALLAKSLL.

This sequence belongs to the ABC1 family. UbiB subfamily.

It localises to the cell inner membrane. It functions in the pathway cofactor biosynthesis; ubiquinone biosynthesis [regulation]. Its function is as follows. Is probably a protein kinase regulator of UbiI activity which is involved in aerobic coenzyme Q (ubiquinone) biosynthesis. In Chromobacterium violaceum (strain ATCC 12472 / DSM 30191 / JCM 1249 / CCUG 213 / NBRC 12614 / NCIMB 9131 / NCTC 9757 / MK), this protein is Probable protein kinase UbiB.